We begin with the raw amino-acid sequence, 239 residues long: 1-(5-phosphoribosyl)-5-[(5-phosphoribosylamino)methylideneamino] imidazole-4-carboxamide isomerase (239 aa).

Aspartate 9 (proton acceptor) is an active-site residue. The active-site Proton donor is aspartate 131.

The protein belongs to the HisA/HisF family.

Its subcellular location is the cytoplasm. It carries out the reaction 1-(5-phospho-beta-D-ribosyl)-5-[(5-phospho-beta-D-ribosylamino)methylideneamino]imidazole-4-carboxamide = 5-[(5-phospho-1-deoxy-D-ribulos-1-ylimino)methylamino]-1-(5-phospho-beta-D-ribosyl)imidazole-4-carboxamide. Its pathway is amino-acid biosynthesis; L-histidine biosynthesis; L-histidine from 5-phospho-alpha-D-ribose 1-diphosphate: step 4/9. The sequence is that of 1-(5-phosphoribosyl)-5-[(5-phosphoribosylamino)methylideneamino] imidazole-4-carboxamide isomerase from Bacteroides thetaiotaomicron (strain ATCC 29148 / DSM 2079 / JCM 5827 / CCUG 10774 / NCTC 10582 / VPI-5482 / E50).